A 165-amino-acid polypeptide reads, in one-letter code: Ribosome maturation factor RimM (165 aa).

The PRC barrel domain maps to 90–161 (EDEYFIVDLV…LITIRPSGEW (72 aa)).

Belongs to the RimM family. As to quaternary structure, binds ribosomal protein uS19.

The protein resides in the cytoplasm. In terms of biological role, an accessory protein needed during the final step in the assembly of 30S ribosomal subunit, possibly for assembly of the head region. Essential for efficient processing of 16S rRNA. May be needed both before and after RbfA during the maturation of 16S rRNA. It has affinity for free ribosomal 30S subunits but not for 70S ribosomes. This chain is Ribosome maturation factor RimM, found in Clostridium perfringens (strain ATCC 13124 / DSM 756 / JCM 1290 / NCIMB 6125 / NCTC 8237 / Type A).